Consider the following 155-residue polypeptide: Small ribosomal subunit protein uS7cz/uS7cy (155 aa).

It belongs to the universal ribosomal protein uS7 family. In terms of assembly, part of the 30S ribosomal subunit.

The protein localises to the plastid. The protein resides in the chloroplast. One of the primary rRNA binding proteins, it binds directly to 16S rRNA where it nucleates assembly of the head domain of the 30S subunit. This chain is Small ribosomal subunit protein uS7cz/uS7cy (rps7-A), found in Eucalyptus globulus subsp. globulus (Tasmanian blue gum).